Reading from the N-terminus, the 292-residue chain is Hemin import ATP-binding protein HmuV (292 aa).

The ABC transporter domain maps to 38–271; that stretch reads LRADGIAVTR…ELLTRVYGHP (234 aa). 70–77 serves as a coordination point for ATP; that stretch reads GPNGAGKS.

It belongs to the ABC transporter superfamily. Heme (hemin) importer (TC 3.A.1.14.5) family. As to quaternary structure, the complex is composed of two ATP-binding proteins (HmuV), two transmembrane proteins (HmuU) and a solute-binding protein (HmuT).

The protein resides in the cell membrane. Part of the ABC transporter complex HmuTUV involved in hemin import. Responsible for energy coupling to the transport system. The sequence is that of Hemin import ATP-binding protein HmuV from Rhodococcus jostii (strain RHA1).